Reading from the N-terminus, the 229-residue chain is Large ribosomal subunit protein uL1 (229 aa).

This sequence belongs to the universal ribosomal protein uL1 family. As to quaternary structure, part of the 50S ribosomal subunit.

Functionally, binds directly to 23S rRNA. The L1 stalk is quite mobile in the ribosome, and is involved in E site tRNA release. Protein L1 is also a translational repressor protein, it controls the translation of the L11 operon by binding to its mRNA. This Desulforamulus reducens (strain ATCC BAA-1160 / DSM 100696 / MI-1) (Desulfotomaculum reducens) protein is Large ribosomal subunit protein uL1.